The primary structure comprises 551 residues: Membrane protein insertase YidC (551 aa).

The chain crosses the membrane as a helical span at residues 6-26; the sequence is YFLWGALFISGYLLFLQWSQD. Positions 34–50 are enriched in low complexity; sequence SVAQSTQSQSETNSQMS. The interval 34–68 is disordered; that stretch reads SVAQSTQSQSETNSQMSDDLPMATQSTTEANAEIP. The segment covering 56 to 68 has biased composition (polar residues); sequence ATQSTTEANAEIP. 5 helical membrane passes run 340–360, 363–383, 433–453, 464–484, and 509–529; these read TVDYGWLWWLAKPLFWLLTLI, FVINWGIAIILIVVCVKAIFF, LGGCLPILVQMPVFLSLYWVL, FFLWIHDLSVMDPYFILPILM, and IMPVAFSIFFLWFPAGLVLYW.

Belongs to the OXA1/ALB3/YidC family. Type 1 subfamily. Interacts with the Sec translocase complex via SecD. Specifically interacts with transmembrane segments of nascent integral membrane proteins during membrane integration.

It is found in the cell inner membrane. Required for the insertion and/or proper folding and/or complex formation of integral membrane proteins into the membrane. Involved in integration of membrane proteins that insert both dependently and independently of the Sec translocase complex, as well as at least some lipoproteins. Aids folding of multispanning membrane proteins. The sequence is that of Membrane protein insertase YidC from Marinomonas sp. (strain MWYL1).